Reading from the N-terminus, the 379-residue chain is Alcohol dehydrogenase class-P (379 aa).

Ser2 is modified (N-acetylserine). Cys47 lines the Zn(2+) pocket. Thr49 is a binding site for an alcohol. Thr49 is an NAD(+) binding site. Positions 50, 69, 70, 99, 102, 105, 113, and 177 each coordinate Zn(2+). An alcohol is bound at residue His69. Residues Val206 and Asp226 each coordinate NAD(+). Ser229 carries the post-translational modification Phosphoserine. The NAD(+) site is built by Arg231, Thr272, Val295, Val297, Thr320, Phe322, and Arg372.

Belongs to the zinc-containing alcohol dehydrogenase family. Class-P subfamily. In terms of assembly, homodimer. Requires Zn(2+) as cofactor. Glutathionylated. In terms of tissue distribution, root specific. Also detected in etiolated seedlings and leaves in cold conditions.

It is found in the cytoplasm. The catalysed reaction is a primary alcohol + NAD(+) = an aldehyde + NADH + H(+). It catalyses the reaction a secondary alcohol + NAD(+) = a ketone + NADH + H(+). The enzyme catalyses ethanol + NAD(+) = acetaldehyde + NADH + H(+). With respect to regulation, alcohol dehydrogenase activity show inverse correlation with the decreasing availability of oxygen. Slightly repressed by thiol-modifying agents N-ethylmaleimide (NEM) and 5,5-dithio-bis-(2-nitrobenzoic acid) (DTNB), as well as by methyl methanethiosulfonate (MMTS) in a dose-dependent manner. Inhibited by hydrogen peroxide H(2)O(2). Alcohol dehydrogenase catalyzing the reduction of toxic aldehydes to the corresponding alcohols. Mostly active on ethanol (EtOH), but exhibits broad substrate selectivity for primary and secondary alcohols (e.g. cinnamyl alcohol, octanol, geraniol, butanol, propyl alcohol, pentanol, isopentanol, ethylene glycol, isopropanol, methanol and tertiary butyl alcohol). Also catalyzes the reverse reaction to convert allyl alcohol to highly toxic acryl-aldehyde. Required for survival and acclimation in hypoxic conditions, especially in roots. Not able to catalyze NADH-dependent degradation of S-nitrosoglutathione (GSNO). The chain is Alcohol dehydrogenase class-P from Arabidopsis thaliana (Mouse-ear cress).